The sequence spans 248 residues: UPF0736 protein BCG9842_B4111 (248 aa).

Belongs to the UPF0736 family.

This Bacillus cereus (strain G9842) protein is UPF0736 protein BCG9842_B4111.